The following is a 217-amino-acid chain: Carbon disulfide hydrolase (217 aa).

The Zn(2+) site is built by C39, H98, and C101. Residues D192 to K217 are disordered.

It belongs to the beta-class carbonic anhydrase family. As to quaternary structure, forms only homooctamers in solution. Requires Zn(2+) as cofactor.

The enzyme catalyses carbon disulfide + 2 H2O = 2 hydrogen sulfide + CO2 + 2 H(+). The protein operates within sulfur metabolism; hydrogen sulfide biosynthesis. In terms of biological role, catalyzes the conversion of carbon disulfide into hydrogen sulfide and carbon dioxide, with carbonyl sulfide as an intermediate. Likely plays a key role in sulfur metabolism that allows A.thiooxidans S1p to grow on carbon disulfide as the main carbon and energy source. Does not show carbonic anhydrase activity (hydration of CO(2) to carbonate). This is Carbon disulfide hydrolase from Acidithiobacillus thiooxidans (Thiobacillus thiooxidans).